The primary structure comprises 340 residues: Ornithine carbamoyltransferase (340 aa).

Carbamoyl phosphate contacts are provided by residues 57–60 (STRT), Gln-84, Arg-108, and 135–138 (HPTQ). L-ornithine is bound by residues Asn-167, Asp-231, and 235 to 236 (SM). Residues 272-273 (CL) and Arg-317 contribute to the carbamoyl phosphate site.

Belongs to the aspartate/ornithine carbamoyltransferase superfamily. OTCase family.

The protein localises to the cytoplasm. It carries out the reaction carbamoyl phosphate + L-ornithine = L-citrulline + phosphate + H(+). It participates in amino-acid biosynthesis; L-arginine biosynthesis; L-arginine from L-ornithine and carbamoyl phosphate: step 1/3. Functionally, reversibly catalyzes the transfer of the carbamoyl group from carbamoyl phosphate (CP) to the N(epsilon) atom of ornithine (ORN) to produce L-citrulline. In Lactiplantibacillus plantarum (strain ATCC BAA-793 / NCIMB 8826 / WCFS1) (Lactobacillus plantarum), this protein is Ornithine carbamoyltransferase (argF).